A 1546-amino-acid polypeptide reads, in one-letter code: Mediator of RNA polymerase II transcription subunit 14 (1546 aa).

2 consecutive short sequence motifs (LXXLL motif) follow at residues 51–55 (LAELL) and 468–472 (LPSLL). Disordered regions lie at residues 692 to 717 (KSAT…PSGS), 1000 to 1193 (GRAP…NRPW), and 1512 to 1546 (NPMM…GGPQ). Composition is skewed to low complexity over residues 693-717 (SATA…PSGS), 1020-1035 (GGPS…GSSP), and 1061-1075 (PSSS…PHPS). Residues 1093-1102 (PPAPHMPHPS) are compositionally biased toward pro residues. Over residues 1125–1149 (GPNTLYMQSHQDSPFTAMSPANNQW) the composition is skewed to polar residues. A compositionally biased stretch (pro residues) spans 1153 to 1163 (PSMPRPSPRPG). Low complexity predominate over residues 1515–1527 (MPMQQLQPQVGPQ).

The protein belongs to the Mediator complex subunit 14 family. Component of the Mediator complex.

The protein resides in the nucleus. Component of the Mediator complex, a coactivator involved in the regulated transcription of nearly all RNA polymerase II-dependent genes. Mediator functions as a bridge to convey information from gene-specific regulatory proteins to the basal RNA polymerase II transcription machinery. Mediator is recruited to promoters by direct interactions with regulatory proteins and serves as a scaffold for the assembly of a functional preinitiation complex with RNA polymerase II and the general transcription factors. This is Mediator of RNA polymerase II transcription subunit 14 (MED14) from Drosophila pseudoobscura pseudoobscura (Fruit fly).